Here is a 311-residue protein sequence, read N- to C-terminus: Pseudouridine-5'-phosphate glycosidase (311 aa).

The Proton donor role is filled by E32. Substrate-binding residues include K96 and V116. D148 provides a ligand contact to Mn(2+). Substrate is bound at residue S150–D152. K169 (nucleophile) is an active-site residue.

Belongs to the pseudouridine-5'-phosphate glycosidase family. In terms of assembly, homotrimer. Requires Mn(2+) as cofactor.

It catalyses the reaction D-ribose 5-phosphate + uracil = psi-UMP + H2O. Catalyzes the reversible cleavage of pseudouridine 5'-phosphate (PsiMP) to ribose 5-phosphate and uracil. Functions biologically in the cleavage direction, as part of a pseudouridine degradation pathway. In Roseiflexus sp. (strain RS-1), this protein is Pseudouridine-5'-phosphate glycosidase.